The sequence spans 548 residues: Isocitrate dehydrogenase [NAD(+)] 1, mitochondrial (548 aa).

A mitochondrion-targeting transit peptide spans Met1–Ala53. NAD(+) is bound by residues Thr132–Thr134 and Asn153. Residues Ser151–Arg157, Arg187, Tyr194, Lys266, Asp311, and Asp335 contribute to the D-threo-isocitrate site. 3 residues coordinate Mg(2+): Asp311, Asp335, and Asp339. Residues His372–Asp377 and Asn391 contribute to the NAD(+) site. The 36-residue stretch at Ile499–Ala534 folds into the EF-hand domain. Ca(2+)-binding residues include Asp512, Asn514, Asp516, Phe518, and Glu523.

It belongs to the isocitrate and isopropylmalate dehydrogenases family. Homodimer. The cofactor is Mg(2+). It depends on Mn(2+) as a cofactor.

It is found in the mitochondrion. The catalysed reaction is D-threo-isocitrate + NAD(+) = 2-oxoglutarate + CO2 + NADH. Its activity is regulated as follows. The homodimer exhibits allosteric regulation by isocitrate. Activated by Mn(2+) and Mg(2+). No activation by Na(+), K(+) or Li(+). Inhibited by Co(2+), Cu(2+) and Ni(2+), but not with Ca(2+) in the presence of Mn(2+) or Mg(2+). Competitively inhibited by NADH, but no effect on activity by 1.0 mM citrate. Strongly inhibited by excess ATP, ADP, AMP and alpha-ketoglutarate. Functionally, performs an essential role in the oxidative function of the tricarboxylic acid cycle and respiration. Catalyzes the decarboxylation of isocitrate to produce 2-oxoglutarate and generate NADH to provide electrons for energy production. No activity with NADP(+). This Phaeodactylum tricornutum (strain CCAP 1055/1) protein is Isocitrate dehydrogenase [NAD(+)] 1, mitochondrial.